The sequence spans 1006 residues: MMVPSLSTSISSPALFKNREGGEEGNDGGLEQLQNQVNDLGDLNFNEEGDYNNDQQPTNEEEGTADNELESLMSLVNDNNNNNNNTSGIDDDNNNDIDDNNNNNNNNNNNNNNNNNNKEGLNDLFISSINVSTLLNDLDQLSDTHSHASVSNQSSNGSVRRGYDIKTQRSVGTKGQGGSSGSSPRSNSLRVYRTFPYRGDHHFSWLNNIRDVDSSEDPNSCHNSNNNNKNNKNNQPSSTHDQTNINNNNNNNCNDNEKPIKPNSTNGIRHSRKYKGLQQLDFLGSNIILPQQQQPQPIEDNQQVVPQPFQVDAESNYNNNNNNNNNNNNNNNNNNNNNNNNNNNNNNDNENNQHPINPVNTQNTQQNVTHSNNNNNNNNNNTAPPNQWSELIESLGYGSQSDEQKTFGSTLDDLNNANSCSDLKDLIVDGISINNETSPSQSQEITDFSKIDNLNKNININNNNNTDSQQPLPSIDVNFSHNNNNNNNDNDNNNNNNNNNNNNNNNNNNNNIQDIQIPYHQNDQDYNIQEGNDINNDNYEIRVSNNDDDNDSSNNNNNNNSKFQENLNLLNTGMGGRICKTDQKKQLSRTITFADPSSILSFFGSIPTDEDQNNNNNKNKNTTTTTTTTNTTTTTTTTTSASAAAQNKLDLLSSLSAGQSSGGVGGGNNVLNSSSTPAIKVNHQHKVTEQNRTSSKISLSTIFPKLPPFTNQQSPPTLSPSKYYYPLLQPEPTTLIRGFSSAADINKRGLKRAKKPMEMEDVYLTQYPLGDDQDSQIALFAIFDGHSGKGCAVAAKEIFPNILLKYIKSTKNENGGKPIYDMRGVFLNAFKEVDAQLSKFEYEGATATVCLVWRAGHQRFVQSANVGDSTAFLSYGNETLFLSKDHRATDPEEIQRIKNDGITLTEGQTRINGLMVSRALGDHFIKHLNCGLSGEPYVSPPISITPFHSHLIVASDGLWDVISGNRAMEIVKVQQTEEKMSNSLLQCAIGSIKAKDNISIIVVTLQ.

Residues 1–12 (MMVPSLSTSISS) are compositionally biased toward polar residues. Disordered stretches follow at residues 1–119 (MMVP…NNKE), 146–188 (SHAS…RSNS), 214–269 (SSED…NGIR), 312–387 (DAES…PPNQ), 459–513 (NINN…NNIQ), 525–563 (DYNI…NSKF), and 604–642 (GSIP…TSAS). Residues 59–69 (NEEEGTADNEL) show a composition bias toward acidic residues. Residues 65–122 (ADNELESLMSLVNDNNNNNNNTSGIDDDNNNDIDDNNNNNNNNNNNNNNNNNNKEGLN) adopt a coiled-coil conformation. Over residues 77 to 88 (NDNNNNNNNTSG) the composition is skewed to low complexity. Residues 89–99 (IDDDNNNDIDD) show a composition bias toward acidic residues. Residues 100–117 (NNNNNNNNNNNNNNNNNN) are compositionally biased toward low complexity. Positions 146-158 (SHASVSNQSSNGS) are enriched in polar residues. Low complexity-rich tracts occupy residues 220–234 (SCHN…NKNN), 244–254 (NINNNNNNNCN), and 316–387 (NYNN…PPNQ). Positions 450–516 (KIDNLNKNIN…NNNNNIQDIQ (67 aa)) form a coiled coil. Positions 466–481 (TDSQQPLPSIDVNFSH) are enriched in polar residues. Residues 482-511 (NNNNNNNDNDNNNNNNNNNNNNNNNNNNNN) are compositionally biased toward low complexity. Over residues 525 to 538 (DYNIQEGNDINNDN) the composition is skewed to polar residues. 2 stretches are compositionally biased toward low complexity: residues 552-561 (SSNNNNNNNS) and 613-639 (NNNN…TTTT). Residues 744 to 1005 (DINKRGLKRA…DNISIIVVTL (262 aa)) enclose the PPM-type phosphatase domain. Asp784, Gly785, Asp956, and Asp996 together coordinate Mn(2+).

It in the C-terminal section; belongs to the PP2C family. It depends on Mg(2+) as a cofactor. The cofactor is Mn(2+).

The enzyme catalyses O-phospho-L-seryl-[protein] + H2O = L-seryl-[protein] + phosphate. It carries out the reaction O-phospho-L-threonyl-[protein] + H2O = L-threonyl-[protein] + phosphate. The polypeptide is Probable protein phosphatase DDB_G0279461 (Dictyostelium discoideum (Social amoeba)).